Reading from the N-terminus, the 330-residue chain is DNA-directed RNA polymerase subunit alpha (330 aa).

The alpha N-terminal domain (alpha-NTD) stretch occupies residues 1–231 (MAILAFQKPD…IYHFMLFSDE (231 aa)). The interval 253–330 (MRQLLKTKLV…DISKYKLDKE (78 aa)) is alpha C-terminal domain (alpha-CTD).

This sequence belongs to the RNA polymerase alpha chain family. Homodimer. The RNAP catalytic core consists of 2 alpha, 1 beta, 1 beta' and 1 omega subunit. When a sigma factor is associated with the core the holoenzyme is formed, which can initiate transcription.

The enzyme catalyses RNA(n) + a ribonucleoside 5'-triphosphate = RNA(n+1) + diphosphate. DNA-dependent RNA polymerase catalyzes the transcription of DNA into RNA using the four ribonucleoside triphosphates as substrates. This is DNA-directed RNA polymerase subunit alpha from Phocaeicola vulgatus (strain ATCC 8482 / DSM 1447 / JCM 5826 / CCUG 4940 / NBRC 14291 / NCTC 11154) (Bacteroides vulgatus).